A 310-amino-acid chain; its full sequence is Malate dehydrogenase (310 aa).

Residues 7-12 (GAGNVG) and Asp32 each bind NAD(+). Residues Arg81 and Arg87 each coordinate substrate. NAD(+)-binding positions include Asn94 and 117-119 (VSN). The substrate site is built by Asn119 and Arg150. Catalysis depends on His174, which acts as the Proton acceptor.

It belongs to the LDH/MDH superfamily. MDH type 3 family.

The catalysed reaction is (S)-malate + NAD(+) = oxaloacetate + NADH + H(+). Functionally, catalyzes the reversible oxidation of malate to oxaloacetate. This Chlorobium chlorochromatii (strain CaD3) protein is Malate dehydrogenase.